The sequence spans 505 residues: Trans-cinnamate 4-monooxygenase (505 aa).

Residues Leu-3–Ile-23 form a helical membrane-spanning segment. Residues Arg-213–Gln-218 and Ala-306 each bind (E)-cinnamate. Cys-447 provides a ligand contact to heme.

Belongs to the cytochrome P450 family. It depends on heme as a cofactor.

The protein resides in the membrane. The enzyme catalyses (E)-cinnamate + reduced [NADPH--hemoprotein reductase] + O2 = (E)-4-coumarate + oxidized [NADPH--hemoprotein reductase] + H2O + H(+). It functions in the pathway phenylpropanoid metabolism; trans-4-coumarate biosynthesis; trans-4-coumarate from trans-cinnamate: step 1/1. Catalyzes the first oxidative step of the phenylpropanoid pathway in higher plants by transforming trans-cinnamate into p-coumarate. The compounds formed by this pathway are essential components for lignification, pollination, and defense against ultraviolet light, predators and pathogens. The polypeptide is Trans-cinnamate 4-monooxygenase (CYP73A12) (Zinnia elegans (Garden zinnia)).